Reading from the N-terminus, the 225-residue chain is tRNA (guanine-N(1)-)-methyltransferase (225 aa).

S-adenosyl-L-methionine contacts are provided by residues glycine 112 and 132–137 (IGDYVL).

Belongs to the RNA methyltransferase TrmD family. In terms of assembly, homodimer.

Its subcellular location is the cytoplasm. It carries out the reaction guanosine(37) in tRNA + S-adenosyl-L-methionine = N(1)-methylguanosine(37) in tRNA + S-adenosyl-L-homocysteine + H(+). Functionally, specifically methylates guanosine-37 in various tRNAs. The polypeptide is tRNA (guanine-N(1)-)-methyltransferase (Porphyromonas gingivalis (strain ATCC 33277 / DSM 20709 / CIP 103683 / JCM 12257 / NCTC 11834 / 2561)).